The sequence spans 856 residues: Nuclear valosin-containing protein-like (856 aa).

Residues 1–220 (MKPRPAGFVD…SLLESDMKRK (220 aa)) form an interaction with RPL5 region. Positions 49 to 52 (RRKR) match the Nucleolar localization signal motif. The residue at position 70 (Lys70) is an N6-acetyllysine. Positions 84–175 (AKRARQGEED…AKDSEGGWFI (92 aa)) are disordered. The Nuclear localization signal signature appears at 85-88 (KRAR). A compositionally biased stretch (acidic residues) spans 92–111 (EDNEYTESYSDDDSSMEDYP). Composition is skewed to polar residues over residues 114 to 124 (QSANHMNSSLL) and 133 to 158 (DSVS…SKTG). Ser134 bears the Phosphoserine mark. Thr138 is modified (phosphothreonine). N6-acetyllysine is present on Lys156. Residue Ser191 is modified to Phosphoserine. The interval 197–236 (PKKPITEIQDSKDSSLLESDMKRKGKLKNKGSKRKKEDLQ) is disordered. The span at 205 to 218 (QDSKDSSLLESDMK) shows a compositional bias: basic and acidic residues. Lys208 participates in a covalent cross-link: Glycyl lysine isopeptide (Lys-Gly) (interchain with G-Cter in SUMO2). Phosphoserine is present on residues Ser211 and Ser215. The short motif at 218 to 232 (KRKGKLKNKGSKRKK) is the Nuclear localization signal element. Residues 219 to 230 (RKGKLKNKGSKR) are compositionally biased toward basic residues. Positions 267–474 (VGGNDMTLKE…LTPGFVGADL (208 aa)) are interaction with WDR74. 305 to 312 (GPPGCGKT) is a binding site for ATP. Residues 496–523 (QQKKNPEMEDLPSKGVQEERLGTEPTSE) form a disordered region. ATP is bound at residue 622–629 (GPPGCGKT).

This sequence belongs to the AAA ATPase family. Interacts with NCL/nucleolin. Isoform 1 and isoform 2 interact with TERT and isoform 1 exhibits a higher binding affinity for TERT compared to isoform 2. Isoform 1 interacts with MTREX in an ATP-dependent manner; the interaction is required to associate NVL with nuclear RNA exosome. Isoform 1 interacts with RPL5 in an ATP-dependent manner. Interacts with WDR74 (through WDR repeats); the interaction is independent of RNA or pre-60S ribosome particles. Widely expressed. Highest level of expression in heart, placenta, skeletal muscle, pancreas and retina.

It localises to the nucleus. Its subcellular location is the nucleoplasm. The protein localises to the nucleolus. Its function is as follows. Participates in the assembly of the telomerase holoenzyme and effecting of telomerase activity via its interaction with TERT. Involved in both early and late stages of the pre-rRNA processing pathways. Spatiotemporally regulates 60S ribosomal subunit biogenesis in the nucleolus. Catalyzes the release of specific assembly factors, such as WDR74, from pre-60S ribosomal particles through the ATPase activity. This Homo sapiens (Human) protein is Nuclear valosin-containing protein-like.